A 51-amino-acid chain; its full sequence is Lantibiotic streptococcin A-M49 (51 aa).

Residues 1-25 (MTKEHEIINSIQEVSLEELDQIIGA) constitute a propeptide that is removed on maturation. Cross-links (beta-methyllanthionine (Thr-Cys)) lie at residues 33–38 (TISHEC) and 42–50 (TWAFLATCC). The segment at residues 35–49 (SHECHLNTWAFLATC) is a cross-link (lanthionine (Ser-Cys)). Position 48 is a 2,3-didehydrobutyrine (threonine 48).

It belongs to the type A lantibiotic family. Maturation of lantibiotics involves the enzymatic conversion of Thr, and Ser into dehydrated AA and the formation of thioether bonds with cysteine. This is followed by membrane translocation and cleavage of the modified precursor.

It localises to the secreted. The protein resides in the cell surface. Lanthionine-containing peptide antibiotic (lantibiotic) active on certain Gram-positive bacteria. The bactericidal activity of lantibiotics is based on depolarization of energized bacterial cytoplasmic membranes, initiated by the formation of aqueous transmembrane pores. The chain is Lantibiotic streptococcin A-M49 (scnA') from Streptococcus pyogenes serotype M49.